We begin with the raw amino-acid sequence, 480 residues long: RNA-splicing ligase RtcB homolog (480 aa).

Asp93, Cys96, His202, His234, and His328 together coordinate Mn(2+). 201–205 (NHYTE) contributes to the GMP binding site. GMP-binding positions include 328–329 (HN), 377–380 (GGTM), Ser384, 403–406 (HGAG), and Lys479. The active-site GMP-histidine intermediate is the His403.

Belongs to the RtcB family. Catalytic component of the tRNA-splicing ligase complex. Requires Mn(2+) as cofactor.

The catalysed reaction is a 3'-end 3'-phospho-ribonucleotide-RNA + a 5'-end dephospho-ribonucleoside-RNA + GTP = a ribonucleotidyl-ribonucleotide-RNA + GMP + diphosphate. It catalyses the reaction a 3'-end 2',3'-cyclophospho-ribonucleotide-RNA + a 5'-end dephospho-ribonucleoside-RNA + GTP + H2O = a ribonucleotidyl-ribonucleotide-RNA + GMP + diphosphate + H(+). Functionally, catalytic subunit of the tRNA-splicing ligase complex that acts by directly joining spliced tRNA halves to mature-sized tRNAs by incorporating the precursor-derived splice junction phosphate into the mature tRNA as a canonical 3',5'-phosphodiester. May act as an RNA ligase with broad substrate specificity, and may function toward other RNAs. The chain is RNA-splicing ligase RtcB homolog from Thalassiosira pseudonana (Marine diatom).